We begin with the raw amino-acid sequence, 756 residues long: Serine/threonine-protein kinase DCLK1 (756 aa).

A phosphoserine mark is found at Ser-32 and Ser-36. Thr-46 carries the phosphothreonine modification. 2 Doublecortin domains span residues 57–143 (KKVR…LEYT) and 186–269 (KLVT…QDDF). The tract at residues 288 to 393 (ASASRRGTTK…QRGWRREESE (106 aa)) is disordered. The span at 297–313 (KSPGPSRRSKSPASTSS) shows a compositional bias: low complexity. A phosphoserine mark is found at Ser-305, Ser-307, Ser-330, Ser-332, Ser-334, Ser-337, Ser-347, Ser-352, Ser-353, Ser-355, Ser-358, Cys-362, and Ser-364. Residues 347 to 364 (SQHGGSSTSLSSTKVCSS) are compositionally biased toward low complexity. Residues 366–375 (DENDGPGEGD) show a composition bias toward acidic residues. At Ser-392 the chain carries Phosphoserine. The region spanning 406–663 (YKVGRTIGDG…AVQVLEHPWV (258 aa)) is the Protein kinase domain. ATP-binding positions include 412-420 (IGDGNFAVV) and Lys-435. Catalysis depends on Asp-527, which acts as the Proton acceptor. Tyr-536 carries the phosphotyrosine modification. Basic and acidic residues predominate over residues 711–723 (QVFRRRRNQDVRS). The disordered stretch occupies residues 711-756 (QVFRRRRNQDVRSRYKAQPAPPELNSESEDYSPSSSETVRSPNSPF). Phosphoserine is present on residues Ser-742, Ser-751, and Ser-754.

This sequence belongs to the protein kinase superfamily. CAMK Ser/Thr protein kinase family. CaMK subfamily.

It catalyses the reaction L-seryl-[protein] + ATP = O-phospho-L-seryl-[protein] + ADP + H(+). The catalysed reaction is L-threonyl-[protein] + ATP = O-phospho-L-threonyl-[protein] + ADP + H(+). Probable kinase that may be involved in a calcium-signaling pathway controlling neuronal migration in the developing brain. May also participate in functions of the mature nervous system. This is Serine/threonine-protein kinase DCLK1 (Dclk1) from Mus musculus (Mouse).